Here is a 698-residue protein sequence, read N- to C-terminus: Sucrose non-fermenting protein kinase 1 (698 aa).

A disordered region spans residues 1-48; sequence MAPRGFEDEELTISLSSSHVRRPQQQQPPPPTQQQHAHQPGSRPADAP. The Protein kinase domain maps to 62–313; that stretch reads YKVLRTLGEG…IEDIRADPWF (252 aa). Residues 68–76 and Lys91 each bind ATP; that span reads LGEGSFGKV. Asp184 serves as the catalytic Proton acceptor. Residues 320–417 form an auto-inhibitory domain (AID) region; it reads YLQLPVEEFF…ALLEPEGSSP (98 aa). One can recognise a UBA domain in the interval 360–397; that stretch reads VTEKISKTMGYGKNDVEEALQASEPSAIKDAYMIVREN. 3 disordered regions span residues 410–435, 482–525, and 564–597; these read LEPE…TTTA, TRTD…KKTK, and ESRH…IDPM. The span at 415-435 shows a compositional bias: low complexity; sequence SSPMLSMSSARSATSTTTTTA. 2 stretches are compositionally biased toward basic and acidic residues: residues 484 to 493 and 564 to 573; these read TDAEKEETSR and ESRHAEERAE.

This sequence belongs to the protein kinase superfamily. CAMK Ser/Thr protein kinase family. SNF1 subfamily. In terms of assembly, component of the AMP-activated protein kinase complex also known as the SNF1 kinase complex (Snf1c), a heterotrimeric complex composed of a catalytic subunit alpha and 2 regulatory subunits beta and gamma.

The protein resides in the cytoplasm. The protein localises to the nucleus. It catalyses the reaction L-seryl-[protein] + ATP = O-phospho-L-seryl-[protein] + ADP + H(+). The catalysed reaction is L-threonyl-[protein] + ATP = O-phospho-L-threonyl-[protein] + ADP + H(+). In terms of biological role, catalytic subunit of the AMP-activated protein kinase complex also known as the SNF1 kinase complex (Snf1c), a central regulator of cellular energy homeostasis, which, in response to a fall in intracellular ATP levels, activates energy-producing pathways and inhibits energy-consuming processes. The complex phosphorylates histone H3 to form H3S10ph, which promotes H3K14ac formation, leading to transcriptional activation through TBP recruitment to the promoters. Activates the expression of the galactose oxidase (GOA) gene and of several cell wall-degrading enzymes (CWDEs) such as pectate lyase, xylanase and glucanase. Plays an important role in sudden death syndrome (SDS) by controlling the colonization of the infected roots. This is Sucrose non-fermenting protein kinase 1 from Fusarium virguliforme.